Consider the following 383-residue polypeptide: Erythronate-4-phosphate dehydrogenase (383 aa).

S45 and T66 together coordinate substrate. NAD(+) is bound by residues D146, T174, 205 to 207 (ASR), and D231. Residue R207 is part of the active site. E236 is a catalytic residue. The active-site Proton donor is H253. G256 serves as a coordination point for NAD(+). Y257 contacts substrate.

This sequence belongs to the D-isomer specific 2-hydroxyacid dehydrogenase family. PdxB subfamily. As to quaternary structure, homodimer.

It is found in the cytoplasm. It catalyses the reaction 4-phospho-D-erythronate + NAD(+) = (R)-3-hydroxy-2-oxo-4-phosphooxybutanoate + NADH + H(+). The protein operates within cofactor biosynthesis; pyridoxine 5'-phosphate biosynthesis; pyridoxine 5'-phosphate from D-erythrose 4-phosphate: step 2/5. In terms of biological role, catalyzes the oxidation of erythronate-4-phosphate to 3-hydroxy-2-oxo-4-phosphonooxybutanoate. The chain is Erythronate-4-phosphate dehydrogenase from Pseudomonas entomophila (strain L48).